Here is a 168-residue protein sequence, read N- to C-terminus: Bifunctional protein PyrR (168 aa).

The PRPP-binding motif lies at 90–102 (LVLIDDVLMSGRT).

Belongs to the purine/pyrimidine phosphoribosyltransferase family. PyrR subfamily.

It carries out the reaction UMP + diphosphate = 5-phospho-alpha-D-ribose 1-diphosphate + uracil. Functionally, regulates the transcription of the pyrimidine nucleotide (pyr) operon in response to exogenous pyrimidines. In terms of biological role, also displays a weak uracil phosphoribosyltransferase activity which is not physiologically significant. The chain is Bifunctional protein PyrR from Pseudomonas fluorescens (strain ATCC BAA-477 / NRRL B-23932 / Pf-5).